Consider the following 130-residue polypeptide: Small ribosomal subunit protein uS9 (130 aa).

Residues 99–110 (KKAGFLTRDPRM) show a composition bias toward basic and acidic residues. The disordered stretch occupies residues 99–130 (KKAGFLTRDPRMKERKKYGLKKARRAPQFSKR). Positions 111 to 130 (KERKKYGLKKARRAPQFSKR) are enriched in basic residues.

It belongs to the universal ribosomal protein uS9 family.

In Clostridium botulinum (strain Alaska E43 / Type E3), this protein is Small ribosomal subunit protein uS9.